Reading from the N-terminus, the 322-residue chain is Acetylglutamate kinase (322 aa).

Substrate-binding positions include 89–90 (GG), Arg111, and Asn217.

It belongs to the acetylglutamate kinase family. ArgB subfamily.

It is found in the cytoplasm. It carries out the reaction N-acetyl-L-glutamate + ATP = N-acetyl-L-glutamyl 5-phosphate + ADP. It functions in the pathway amino-acid biosynthesis; L-arginine biosynthesis; N(2)-acetyl-L-ornithine from L-glutamate: step 2/4. Catalyzes the ATP-dependent phosphorylation of N-acetyl-L-glutamate. In Ehrlichia ruminantium (strain Gardel), this protein is Acetylglutamate kinase.